Reading from the N-terminus, the 280-residue chain is 3-hydroxyanthranilate 3,4-dioxygenase (280 aa).

The domain A (catalytic) stretch occupies residues 1 to 160 (MAIPVNVKKW…SEQYKSGKPD (160 aa)). Position 43 (Arg43) interacts with O2. Residues His47, Glu53, and His91 each contribute to the Fe cation site. Glu53 contributes to the substrate binding site. Substrate-binding residues include Arg95 and Glu105. The interval 161-177 (PAQPIGKMPFFLNTEQV) is linker. Positions 178-280 (MEPFSFQNWL…IALSTSQVPA (103 aa)) are domain B.

The protein belongs to the 3-HAO family. Monomer. It depends on Fe(2+) as a cofactor.

It is found in the cytoplasm. The protein localises to the cytosol. The enzyme catalyses 3-hydroxyanthranilate + O2 = (2Z,4Z)-2-amino-3-carboxymuconate 6-semialdehyde. The protein operates within cofactor biosynthesis; NAD(+) biosynthesis; quinolinate from L-kynurenine: step 3/3. Functionally, catalyzes the oxidative ring opening of 3-hydroxyanthranilate to 2-amino-3-carboxymuconate semialdehyde, which spontaneously cyclizes to quinolinate. The sequence is that of 3-hydroxyanthranilate 3,4-dioxygenase (haao) from Xenopus tropicalis (Western clawed frog).